Here is a 341-residue protein sequence, read N- to C-terminus: Anthranilate phosphoribosyltransferase (341 aa).

Residues Gly81, 84 to 85 (GD), 91 to 94 (NVST), 109 to 117 (KHGNRSVSS), and Ser121 each bind 5-phospho-alpha-D-ribose 1-diphosphate. Gly81 contributes to the anthranilate binding site. Ser93 is a Mg(2+) binding site. Position 112 (Asn112) interacts with anthranilate. Arg167 serves as a coordination point for anthranilate. The Mg(2+) site is built by Asp226 and Glu227.

It belongs to the anthranilate phosphoribosyltransferase family. Homodimer. The cofactor is Mg(2+).

The catalysed reaction is N-(5-phospho-beta-D-ribosyl)anthranilate + diphosphate = 5-phospho-alpha-D-ribose 1-diphosphate + anthranilate. It participates in amino-acid biosynthesis; L-tryptophan biosynthesis; L-tryptophan from chorismate: step 2/5. In terms of biological role, catalyzes the transfer of the phosphoribosyl group of 5-phosphorylribose-1-pyrophosphate (PRPP) to anthranilate to yield N-(5'-phosphoribosyl)-anthranilate (PRA). The sequence is that of Anthranilate phosphoribosyltransferase from Saccharophagus degradans (strain 2-40 / ATCC 43961 / DSM 17024).